The sequence spans 34 residues: Photosystem I reaction center subunit XII (34 aa).

A helical membrane pass occupies residues 11-31 (VAIAFVVALIAGIAALLLSTA).

The protein belongs to the PsaM family. In terms of assembly, the G.violaceus PSI reaction center is composed of one copy each of PsaA,B,C,D,E,F,L,M and Z, and forms trimeric complexes.

It is found in the cell inner membrane. The protein is Photosystem I reaction center subunit XII of Gloeobacter violaceus (strain ATCC 29082 / PCC 7421).